The following is a 440-amino-acid chain: Chromosomal replication initiator protein DnaA (440 aa).

A domain I, interacts with DnaA modulators region spans residues 1-72 (MTELDSLWEA…KEFAQRELGR (72 aa)). The domain II stretch occupies residues 72-103 (RNIEPHYVLEGEFTYTNKKTEDDPTPSFEMDT). Positions 104-320 (PLNPHYNFGT…GALTKVQAFA (217 aa)) are domain III, AAA+ region. Gly148, Gly150, Lys151, and Thr152 together coordinate ATP. The interval 321-440 (NLSGERITPS…ITKLKAKLRS (120 aa)) is domain IV, binds dsDNA.

The protein belongs to the DnaA family. In terms of assembly, oligomerizes as a right-handed, spiral filament on DNA at oriC.

It localises to the cytoplasm. Plays an essential role in the initiation and regulation of chromosomal replication. ATP-DnaA binds to the origin of replication (oriC) to initiate formation of the DNA replication initiation complex once per cell cycle. Binds the DnaA box (a 9 base pair repeat at the origin) and separates the double-stranded (ds)DNA. Forms a right-handed helical filament on oriC DNA; dsDNA binds to the exterior of the filament while single-stranded (ss)DNA is stabiized in the filament's interior. The ATP-DnaA-oriC complex binds and stabilizes one strand of the AT-rich DNA unwinding element (DUE), permitting loading of DNA polymerase. After initiation quickly degrades to an ADP-DnaA complex that is not apt for DNA replication. Binds acidic phospholipids. This chain is Chromosomal replication initiator protein DnaA, found in Limosilactobacillus reuteri (strain DSM 20016) (Lactobacillus reuteri).